The sequence spans 255 residues: Hydroxyethylthiazole kinase (255 aa).

Residue methionine 38 coordinates substrate. The ATP site is built by arginine 114 and threonine 160. Glycine 187 is a substrate binding site.

It belongs to the Thz kinase family. The cofactor is Mg(2+).

The catalysed reaction is 5-(2-hydroxyethyl)-4-methylthiazole + ATP = 4-methyl-5-(2-phosphooxyethyl)-thiazole + ADP + H(+). It functions in the pathway cofactor biosynthesis; thiamine diphosphate biosynthesis; 4-methyl-5-(2-phosphoethyl)-thiazole from 5-(2-hydroxyethyl)-4-methylthiazole: step 1/1. Its function is as follows. Catalyzes the phosphorylation of the hydroxyl group of 4-methyl-5-beta-hydroxyethylthiazole (THZ). The sequence is that of Hydroxyethylthiazole kinase from Lysinibacillus sphaericus (strain C3-41).